The sequence spans 164 residues: RNA pyrophosphohydrolase (164 aa).

The region spanning 8-153 (PYRSNVGAAL…KRPIYERLAR (146 aa)) is the Nudix hydrolase domain. The Nudix box motif lies at 45–66 (GGIDGDEDPAAAVLRELDEEIG).

The protein belongs to the Nudix hydrolase family. RppH subfamily. Requires a divalent metal cation as cofactor.

Functionally, accelerates the degradation of transcripts by removing pyrophosphate from the 5'-end of triphosphorylated RNA, leading to a more labile monophosphorylated state that can stimulate subsequent ribonuclease cleavage. The chain is RNA pyrophosphohydrolase from Acidiphilium cryptum (strain JF-5).